A 352-amino-acid polypeptide reads, in one-letter code: Keratocan (352 aa).

The signal sequence occupies residues 1 to 20 (MASTICFILWVVFVTDTVWT). In terms of domain architecture, LRRNT spans 33–71 (EDWTMHDFDCPRECFCPPSFPTALYCENRGLKEIPAIPS). Cystine bridges form between C42/C48 and C46/C58. LRR repeat units follow at residues 72–93 (RIWY…PFEN), 96–117 (QLRW…KGAL), 122–142 (KLLF…PLPR), 143–164 (SLEQ…TFSN), 167–180 (NLTL…KLLD), 193–214 (NLMQ…LPAN), 215–235 (TMQV…YFNV), and 238–258 (KVAF…PSSG). Residue N93 is glycosylated (N-linked (GlcNAc...) (keratan sulfate) asparagine). A glycan (N-linked (GlcNAc...) (keratan sulfate) asparagine) is linked at N167. The N-linked (GlcNAc...) asparagine glycan is linked to N222. N260 carries N-linked (GlcNAc...) (keratan sulfate) asparagine glycosylation. LRR repeat units follow at residues 263–282 (SILD…KISA) and 283–304 (HLQH…VICP). The N-linked (GlcNAc...) asparagine glycan is linked to N298. A disulfide bond links C303 and C343.

This sequence belongs to the small leucine-rich proteoglycan (SLRP) family. SLRP class II subfamily. Post-translationally, binds three long, highly sulfated keratan sulfate chains in the cornea but short, non-sulfated poly(N-acetyllactosamine) chains in other tissues. In terms of processing, the N-terminus is blocked. In terms of tissue distribution, abundant in cornea and sclera but also found in other tissues.

It localises to the secreted. The protein resides in the extracellular space. Its subcellular location is the extracellular matrix. Its function is as follows. May be important in developing and maintaining corneal transparency and for the structure of the stromal matrix. The protein is Keratocan (KERA) of Bos taurus (Bovine).